The following is a 254-amino-acid chain: ADP-ribose 1''-phosphate phosphatase (254 aa).

The Macro domain occupies 1-254 (MSIITEIQGD…IVQPPGSGYE (254 aa)). Substrate contacts are provided by residues 9–11 (GDL), 23–25 (ACN), and 30–35 (WGKGIA). Positions 86–125 (IPPQPADYQPQPQPQSQTAPLSNCGRGRGRGRGRAGGGAL) are disordered. Low complexity predominate over residues 91–102 (ADYQPQPQPQSQ). Residue 220–226 (LNAGLFE) coordinates substrate.

It belongs to the POA1 family.

The enzyme catalyses ADP-alpha-D-ribose 1''-phosphate + H2O = ADP-D-ribose + phosphate. Functionally, highly specific phosphatase involved in the metabolism of ADP-ribose 1''-phosphate (Appr1p) which is produced as a consequence of tRNA splicing. The sequence is that of ADP-ribose 1''-phosphate phosphatase (POA1) from Ajellomyces capsulatus (strain NAm1 / WU24) (Darling's disease fungus).